A 153-amino-acid chain; its full sequence is Iron-sulfur cluster assembly scaffold protein IscU 1 (153 aa).

The [2Fe-2S] cluster site is built by Cys33, Cys58, His101, and Cys102.

This sequence belongs to the NifU family. As to quaternary structure, forms a heterotetramer with IscS2.

Its function is as follows. A scaffold on which IscS assembles Fe-S clusters. Subsequently gives the nascent cluster to other proteins. It is likely that Fe-S cluster coordination is flexible as the role of this complex is to build and then hand off Fe-S clusters. The chain is Iron-sulfur cluster assembly scaffold protein IscU 1 (iscU1) from Archaeoglobus fulgidus (strain ATCC 49558 / DSM 4304 / JCM 9628 / NBRC 100126 / VC-16).